Reading from the N-terminus, the 349-residue chain is Phosphate acyltransferase (349 aa).

Belongs to the PlsX family. In terms of assembly, homodimer. Probably interacts with PlsY.

The protein resides in the cytoplasm. The enzyme catalyses a fatty acyl-[ACP] + phosphate = an acyl phosphate + holo-[ACP]. The protein operates within lipid metabolism; phospholipid metabolism. In terms of biological role, catalyzes the reversible formation of acyl-phosphate (acyl-PO(4)) from acyl-[acyl-carrier-protein] (acyl-ACP). This enzyme utilizes acyl-ACP as fatty acyl donor, but not acyl-CoA. This chain is Phosphate acyltransferase, found in Albidiferax ferrireducens (strain ATCC BAA-621 / DSM 15236 / T118) (Rhodoferax ferrireducens).